A 192-amino-acid polypeptide reads, in one-letter code: MGVHECPAWLWLLLSLVSLPLGLPVPGAPPRLICDSRVLERYLLEAKEAENVTMGCSESCSLNENITVPDTKVNFYAWKRMEVGQQAVEVWQGLALLSEAVLRGQAVLANSSQPFEPLQLHMDKAISGLRSITTLLRALGAQEAISLPDAASAAPLRTITADTFCKLFRVYSNFLRGKLKLYTGEACRRGDR.

An N-terminal signal peptide occupies residues 1–27 (MGVHECPAWLWLLLSLVSLPLGLPVPG). 2 disulfides stabilise this stretch: cysteine 34-cysteine 187 and cysteine 56-cysteine 60. Asparagine 51 carries an N-linked (GlcNAc...) asparagine glycan. N-linked (GlcNAc...) asparagine glycosylation is found at asparagine 65 and asparagine 110. Serine 152 carries O-linked (GalNAc...) serine glycosylation.

The protein belongs to the EPO/TPO family. Produced by kidney or liver of adult mammals and by liver of fetal or neonatal mammals.

It localises to the secreted. Hormone involved in the regulation of erythrocyte proliferation and differentiation and the maintenance of a physiological level of circulating erythrocyte mass. Binds to EPOR leading to EPOR dimerization and JAK2 activation thereby activating specific downstream effectors, including STAT1 and STAT3. This chain is Erythropoietin (EPO), found in Macaca fascicularis (Crab-eating macaque).